The following is a 295-amino-acid chain: Adrenocorticotropic hormone receptor (295 aa).

The Extracellular portion of the chain corresponds to 1-23; that stretch reads MRHILNLYENINSTARNNSDCPA. 2 N-linked (GlcNAc...) asparagine glycosylation sites follow: N12 and N17. 2 disulfides stabilise this stretch: C21–C253 and C245–C251. A helical membrane pass occupies residues 24-49; it reads VILPEEIFFTVSIVGVLENLMVLLAV. At 50 to 58 the chain is on the cytoplasmic side; the sequence is AKNKSLQSP. A helical membrane pass occupies residues 59-79; that stretch reads MYFFICSLAISDMLGSLYKIL. Residues 80–104 lie on the Extracellular side of the membrane; the sequence is ENVLIMFRNMGYLEPRGSFESTADD. A helical membrane pass occupies residues 105 to 126; that stretch reads VVDSLFILSLLGSICSLSVIAA. The Cytoplasmic segment spans residues 127-147; that stretch reads DRYITIFHALQYHSIVTMHRA. Residues 148–168 traverse the membrane as a helical segment; the sequence is LVVLTVLWAGCTGSGITIVTF. The Extracellular segment spans residues 169-180; the sequence is SHHVPTVIAFTA. Residues 181 to 199 form a helical membrane-spanning segment; that stretch reads LFPLMLAFILCLYVHMFLL. Residues 200–217 lie on the Cytoplasmic side of the membrane; the sequence is ARSHARRTSSLPKANMRG. The chain crosses the membrane as a helical span at residues 218–244; sequence AITLTVLLGVFIFCWAPFVLHVLLMTF. Over 245-256 the chain is Extracellular; sequence CPADPYCACYMS. Residues 257–278 traverse the membrane as a helical segment; the sequence is LFQVNGVLIMCNAVIDPFIYAF. Residues 279–295 are Cytoplasmic-facing; it reads RSPELRVAFKKMVICNW. C293 carries S-palmitoyl cysteine lipidation.

This sequence belongs to the G-protein coupled receptor 1 family. In terms of assembly, homodimer. Interacts with corticotropin (ACTH). Interacts with MRAP; this interaction targets MC2R to the plasma membrane. Interacts with MRAP2; competing with MRAP for binding to MC2R and impairing the binding of corticotropin (ACTH). Post-translationally, ubiquitinated by MGRN1 that may be involved in post-endocytic trafficking and/or degradation of internalized receptor.

Its subcellular location is the cell membrane. In terms of biological role, hormone receptor primarily expressed in adrenal cortex that plays a key role in regulating adrenocortical function. Upon corticotropin (ACTH) binding, facilitates the release of adrenal glucocorticoids, including cortisol and corticosterone. In addition, MC2R is required for fetal and neonatal adrenal gland development. Mechanistically, activates adenylate cyclase (cAMP), the MAPK cascade as well as the cAMP-dependent protein kinase A pathway leading to steroidogenic factor 1/NR5A1-mediated transcriptional activation. The chain is Adrenocorticotropic hormone receptor (MC2R) from Ovis aries (Sheep).